The sequence spans 341 residues: S-adenosylmethionine:tRNA ribosyltransferase-isomerase (341 aa).

This sequence belongs to the QueA family. In terms of assembly, monomer.

The protein localises to the cytoplasm. It carries out the reaction 7-aminomethyl-7-carbaguanosine(34) in tRNA + S-adenosyl-L-methionine = epoxyqueuosine(34) in tRNA + adenine + L-methionine + 2 H(+). It functions in the pathway tRNA modification; tRNA-queuosine biosynthesis. Functionally, transfers and isomerizes the ribose moiety from AdoMet to the 7-aminomethyl group of 7-deazaguanine (preQ1-tRNA) to give epoxyqueuosine (oQ-tRNA). This Clostridium kluyveri (strain NBRC 12016) protein is S-adenosylmethionine:tRNA ribosyltransferase-isomerase.